Here is a 287-residue protein sequence, read N- to C-terminus: Festuclavine synthase II (287 aa).

Belongs to the fgaFS/easG family.

The enzyme catalyses festuclavine + NAD(+) = 6,8-dimethyl-6,7-didehydroergoline + NADH + H(+). Its pathway is alkaloid biosynthesis; ergot alkaloid biosynthesis. Festuclavine synthase; part of the gene cluster that mediates the biosynthesis of isofumigaclavines, fungal ergot alkaloids. The tryptophan dimethylallyltransferase ifgA catalyzes the first step of ergot alkaloid biosynthesis by condensing dimethylallyl diphosphate (DMAP) and tryptophan to form 4-dimethylallyl-L-tryptophan. The second step is catalyzed by the methyltransferase ifgB that methylates 4-dimethylallyl-L-tryptophan in the presence of S-adenosyl-L-methionine, resulting in the formation of N-methyl-dimethylallyl-L-tryptophan. The catalase ifgD and the FAD-dependent oxidoreductase ifgC then transform N-methyl-dimethylallyl-L-tryptophan to chanoclavine-I which is further oxidized by ifgE in the presence of NAD(+), resulting in the formation of chanoclavine-I aldehyde. The chanoclavine-I aldehyde reductases ifgG and/or fgaOx3 reduce chanoclavine-I aldehyde to dihydrochanoclavine-I aldehyde that spontaneously dehydrates to form 6,8-dimethyl-6,7-didehydroergoline. The festuclavine dehydrogenases ifgF1 and/or ifgF2 then catalyze the reduction of 6,8-dimethyl-6,7-didehydroergoline to form festuclavine. Hydrolysis of festuclavine by a yet undetermined cytochrome P450 monooxygenase (called ifgH) then leads to the formation of isofumigaclavine B which is in turn acetylated by ifgI to isofumigaclavine A. Penicillium roqueforti has interestingly at least two sets of genes for the consumption of chanoclavine-I aldehyde on three different loci, the OYEs ifgG/fgaOx3 and the festuclavine synthase homologs ifgF1/ifgF2. The reason for the duplication of these genes is unclear, probably to ensure the conversion of chanoclavine-I aldehyde by differential gene expression under various environmental conditions. The chain is Festuclavine synthase II from Penicillium roqueforti (strain FM164).